A 304-amino-acid polypeptide reads, in one-letter code: Putative S-adenosyl-L-methionine-dependent methyltransferase Mmcs_1043 (304 aa).

Residues Asp-130 and 159-160 (DL) each bind S-adenosyl-L-methionine.

This sequence belongs to the UPF0677 family.

In terms of biological role, exhibits S-adenosyl-L-methionine-dependent methyltransferase activity. The polypeptide is Putative S-adenosyl-L-methionine-dependent methyltransferase Mmcs_1043 (Mycobacterium sp. (strain MCS)).